We begin with the raw amino-acid sequence, 492 residues long: N-succinylglutamate 5-semialdehyde dehydrogenase (492 aa).

220-225 (GSANTG) contributes to the NAD(+) binding site. Active-site residues include Glu243 and Cys277.

The protein belongs to the aldehyde dehydrogenase family. AstD subfamily.

It catalyses the reaction N-succinyl-L-glutamate 5-semialdehyde + NAD(+) + H2O = N-succinyl-L-glutamate + NADH + 2 H(+). It participates in amino-acid degradation; L-arginine degradation via AST pathway; L-glutamate and succinate from L-arginine: step 4/5. Functionally, catalyzes the NAD-dependent reduction of succinylglutamate semialdehyde into succinylglutamate. The chain is N-succinylglutamate 5-semialdehyde dehydrogenase from Escherichia coli O7:K1 (strain IAI39 / ExPEC).